A 108-amino-acid chain; its full sequence is MTGRGKGGKVLSLGGKGGKGAKRHRKVLRDNIQGITKPAIRRLARRGGVKRISGLIYEETRGVLKVFLENVIRDSVTYTEHARRKTVTAMDVVYALKRQGRTLYGFGG.

The disordered stretch occupies residues 1–24; sequence MTGRGKGGKVLSLGGKGGKGAKRH. Residues 17–21 mediate DNA binding; the sequence is GGKGA.

The protein belongs to the histone H4 family. In terms of assembly, the nucleosome is a histone octamer containing two molecules each of H2A, H2B, H3 and H4 assembled in one H3-H4 heterotetramer and two H2A-H2B heterodimers. The octamer wraps approximately 147 bp of DNA.

It localises to the nucleus. Its subcellular location is the chromosome. Its function is as follows. Core component of nucleosome. Nucleosomes wrap and compact DNA into chromatin, limiting DNA accessibility to the cellular machineries which require DNA as a template. Histones thereby play a central role in transcription regulation, DNA repair, DNA replication and chromosomal stability. DNA accessibility is regulated via a complex set of post-translational modifications of histones, also called histone code, and nucleosome remodeling. This Mastigamoeba balamuthi (Phreatamoeba balamuthi) protein is Histone H4.